The sequence spans 127 residues: UPF0325 protein VIBHAR_03240 (127 aa).

The protein belongs to the UPF0325 family.

The protein is UPF0325 protein VIBHAR_03240 of Vibrio campbellii (strain ATCC BAA-1116).